Here is a 359-residue protein sequence, read N- to C-terminus: Acidic skeletal organic matrix protein (359 aa).

The signal sequence occupies residues 1–26 (MLAPRLAFVLLLSSYFGSILITSVES). 2 disordered regions span residues 60–83 (FEED…EDFD) and 224–254 (SEAE…DPNE). The stretch at 66 to 89 (DDDDEDNEESENEVEDFDDENALS) forms a coiled coil.

As to expression, component of the acid-insoluble and acid-soluble organic matrix of the aragonitic skeleton (at protein level).

The protein resides in the secreted. The sequence is that of Acidic skeletal organic matrix protein from Acropora millepora (Staghorn coral).